A 443-amino-acid polypeptide reads, in one-letter code: F-box only protein 39 (443 aa).

Residues 13-59 (QSCWATLPDVCLRRVFWWLGDRDRSRAALVCRKWNQIMYSADLWRYR) enclose the F-box domain.

In terms of assembly, directly interacts with SKP1 and CUL1.

Substrate-recognition component of the SCF (SKP1-CUL1-F-box protein)-type E3 ubiquitin ligase complex. The chain is F-box only protein 39 (Fbxo39) from Mus musculus (Mouse).